We begin with the raw amino-acid sequence, 292 residues long: Protein LicB (292 aa).

2 EamA domains span residues 70 to 139 (ALSG…LLAI) and 160 to 286 (LGWS…VTLY).

This chain is Protein LicB (licB), found in Haemophilus influenzae (strain ATCC 51907 / DSM 11121 / KW20 / Rd).